The following is a 288-amino-acid chain: Chemotaxis protein methyltransferase 2 (288 aa).

Positions 1 to 280 (MNEIVITDTD…TGYYKPHKGK (280 aa)) constitute a CheR-type methyltransferase domain. S-adenosyl-L-methionine contacts are provided by residues Asn-76, Thr-78, Arg-82, Glu-119, Asp-145, 200-201 (NL), and 219-220 (RN).

The enzyme catalyses L-glutamyl-[protein] + S-adenosyl-L-methionine = [protein]-L-glutamate 5-O-methyl ester + S-adenosyl-L-homocysteine. Functionally, methylation of the membrane-bound methyl-accepting chemotaxis proteins (MCP) to form gamma-glutamyl methyl ester residues in MCP. The chain is Chemotaxis protein methyltransferase 2 (cheR2) from Vibrio cholerae serotype O1 (strain ATCC 39315 / El Tor Inaba N16961).